The following is a 156-amino-acid chain: Small ribosomal subunit protein uS7 (156 aa).

The protein belongs to the universal ribosomal protein uS7 family. In terms of assembly, part of the 30S ribosomal subunit. Contacts proteins S9 and S11.

In terms of biological role, one of the primary rRNA binding proteins, it binds directly to 16S rRNA where it nucleates assembly of the head domain of the 30S subunit. Is located at the subunit interface close to the decoding center, probably blocks exit of the E-site tRNA. In Pediococcus pentosaceus (strain ATCC 25745 / CCUG 21536 / LMG 10740 / 183-1w), this protein is Small ribosomal subunit protein uS7.